A 298-amino-acid chain; its full sequence is Myoblast determination protein 1 homolog (298 aa).

A compositionally biased stretch (basic and acidic residues) spans 53–73 (PEEHPHTRAPPREPTEEEHVR). Positions 53–77 (PEEHPHTRAPPREPTEEEHVRAPSG) are disordered. The region spanning 100–151 (DRRKAATMRERRRLSKVNEAFETLKRCTSTNPNQRLPKVEILRNAIRYIESL) is the bHLH domain. Disordered regions lie at residues 170-220 (SGES…GKSS) and 242-298 (CPIL…YQVL). 2 stretches are compositionally biased toward polar residues: residues 173 to 183 (SDASSPRSNCS) and 257 to 284 (CSPQEGGNLSDSGAQIPSPTNCTPLPQE).

Efficient DNA binding requires dimerization with another bHLH protein. Seems to form active heterodimers with ITF-2.

Its subcellular location is the nucleus. In terms of biological role, acts as a transcriptional activator that promotes transcription of muscle-specific target genes and plays a role in muscle differentiation. Induces fibroblasts to differentiate into myoblasts. Interacts with and is inhibited by the twist protein. This interaction probably involves the basic domains of both proteins. In Gallus gallus (Chicken), this protein is Myoblast determination protein 1 homolog (MYOD1).